We begin with the raw amino-acid sequence, 485 residues long: Predicted GPI-anchored protein 27 (485 aa).

Positions 1–20 are cleaved as a signal peptide; the sequence is MHFTSSLLATLIWFTLPVQS. Residues Asn-30, Asn-86, Asn-96, and Asn-444 are each glycosylated (N-linked (GlcNAc...) asparagine). Residue Gly-467 is the site of GPI-anchor amidated glycine attachment. Residues 468 to 485 constitute a propeptide, removed in mature form; the sequence is LVLVSSGVLLGTCLLFIL.

It is found in the cell membrane. This chain is Predicted GPI-anchored protein 27 (PGA27), found in Candida albicans (strain SC5314 / ATCC MYA-2876) (Yeast).